Reading from the N-terminus, the 326-residue chain is Centriolar satellite-associated tubulin polyglutamylase complex regulator 1 (326 aa).

Positions 1 to 111 are required for interaction with PCM1; that stretch reads MLSPERLALP…HCLLQLLCPD (111 aa). Residues 1–225 form a required for interaction with TPGS1, LRRC49, and TTLL1 region; sequence MLSPERLALP…SCPPPALVKE (225 aa).

Belongs to the CSTPP1 family. In terms of assembly, interacts with PCM1. Interacts with TTLL1, TPGS1, TPGS2 and LRRC49; the interactions link CSTPP1 to the complex TPGC. Binds to alpha-tubulin.

It is found in the cytoplasm. The protein localises to the cytoskeleton. Its subcellular location is the microtubule organizing center. The protein resides in the centrosome. It localises to the centriolar satellite. In terms of biological role, regulator of the tubulin polyglutamylase complex (TPGC) that controls cytoskeletal organization, nuclear shape, and cilium disassembly by balancing microtubule and actin assembly. Regulates the assembly and stability of the TPGC and thereby modulates polyglutamylation of the microtubule, which antagonizes MAP4 binding. The chain is Centriolar satellite-associated tubulin polyglutamylase complex regulator 1 (CSTPP1) from Bos taurus (Bovine).